Consider the following 217-residue polypeptide: MOB kinase activator 3A (217 aa).

Zn(2+) is bound by residues Cys-83, Cys-88, His-165, and His-170.

Belongs to the MOB1/phocein family.

Functionally, may regulate the activity of kinases. This chain is MOB kinase activator 3A (Mob3a), found in Mus musculus (Mouse).